Consider the following 394-residue polypeptide: Aspergillopepsin-1 (394 aa).

Positions 1–20 are cleaved as a signal peptide; that stretch reads MVVFSKVTAAVFGLATIASA. A propeptide spans 21–69 (activation peptide); that stretch reads APAPPTRKGFTVQQQARPAQKKQVNLPAMYAHALTKFGGSVPESVKVAA. Residues 85–391 form the Peptidase A1 domain; it reads YLTPVNVGGT…DSEGPRLGFA (307 aa). Active-site residues include Asp101 and Asp283. An intrachain disulfide couples Cys319 to Cys354.

The protein belongs to the peptidase A1 family. Monomer.

It is found in the secreted. It carries out the reaction Hydrolysis of proteins with broad specificity. Generally favors hydrophobic residues in P1 and P1', but also accepts Lys in P1, which leads to activation of trypsinogen. Does not clot milk.. Secreted aspartic endopeptidase that allows assimilation of proteinaceous substrates. The scissile peptide bond is attacked by a nucleophilic water molecule activated by two aspartic residues in the active site. Shows a broad primary substrate specificity. Favors hydrophobic residues at the P1 and P1' positions, but also accepts a lysine residue in the P1 position, leading to the activation of trypsinogen and chymotrypsinogen A. This Aspergillus clavatus (strain ATCC 1007 / CBS 513.65 / DSM 816 / NCTC 3887 / NRRL 1 / QM 1276 / 107) protein is Aspergillopepsin-1 (pepA).